Consider the following 424-residue polypeptide: Probable serine/threonine-protein kinase PBL12 (424 aa).

Positions Phe88–Ile368 constitute a Protein kinase domain. Residues Leu94–Val102 and Lys123 each bind ATP. Catalysis depends on Asp218, which acts as the Proton acceptor.

Belongs to the protein kinase superfamily. Ser/Thr protein kinase family. Expressed specifically in roots.

Its subcellular location is the cell membrane. The enzyme catalyses L-seryl-[protein] + ATP = O-phospho-L-seryl-[protein] + ADP + H(+). It catalyses the reaction L-threonyl-[protein] + ATP = O-phospho-L-threonyl-[protein] + ADP + H(+). May play a role in the signal transduction pathway of osmotic stress. May be involved in plant defense signaling. The protein is Probable serine/threonine-protein kinase PBL12 of Arabidopsis thaliana (Mouse-ear cress).